The chain runs to 956 residues: Nitrogen regulatory protein NUT1 (956 aa).

The span at M1–F12 shows a compositional bias: basic and acidic residues. 5 disordered regions span residues M1–Q51, Q120–A222, K240–P262, G348–S373, and T524–T661. Low complexity predominate over residues R15 to R37. Composition is skewed to polar residues over residues D42–Q51, P131–S153, S167–S194, and A208–S217. The span at N588 to P613 shows a compositional bias: polar residues. Composition is skewed to low complexity over residues S623–P633 and S640–T661. Residues C663 to C687 form a GATA-type zinc finger. A disordered region spans residues K708–T890. Over residues G713–V760 the composition is skewed to polar residues. The segment covering V812–P839 has biased composition (low complexity). 2 stretches are compositionally biased toward polar residues: residues S849 to H863 and P872 to A881.

The protein localises to the nucleus. In terms of biological role, major nitrogen regulatory protein; activates expression of nitrogen-regulated genes. This is Nitrogen regulatory protein NUT1 (NUT1) from Pyricularia oryzae (strain 70-15 / ATCC MYA-4617 / FGSC 8958) (Rice blast fungus).